The primary structure comprises 501 residues: TNF receptor-associated factor 2 (501 aa).

Ala2 carries the N-acetylalanine modification. Ser5 carries the phosphoserine modification. The residue at position 7 (Thr7) is a Phosphothreonine. Position 11 is a phosphoserine (Ser11). Thr22 is modified (phosphothreonine). Lys31 participates in a covalent cross-link: Glycyl lysine isopeptide (Lys-Gly) (interchain with G-Cter in ubiquitin). Residues 34 to 73 (CSACRNVLRRPFQAQCGHRYCSFCLASILSSGPQNCAACV) form an RING-type zinc finger. At Thr117 the chain carries Phosphothreonine; by PKC. 2 TRAF-type zinc fingers span residues 124–180 (CHEG…AHHE) and 177–233 (AHHE…EKQQ). Residues 283-293 (ENIVCVLNREV) form an important for interaction with BIRC2 and BIRC3 region. The stretch at 299–348 (TAEACSRQHRLDQDKIEALSSKVQQLERSIGLKDLAMADLEQKVLEMEAS) forms a coiled coil. Lys320 participates in a covalent cross-link: Glycyl lysine isopeptide (Lys-Gly) (interchain with G-Cter in ubiquitin). Residues 351–496 (DGVFIWKISD…DDAIFIKAIV (146 aa)) enclose the MATH domain.

Belongs to the TNF receptor-associated factor family. A subfamily. In terms of assembly, homotrimer. Heterotrimer with TRAF1. Heterotrimer with TRAF3 (via TRAF domain). The domain containing the RING-type and the first TRAF-type zinc finger can also form homodimers (in vitro). Interacts with TNFRSF1B/TNFR2. Interacts with TNFRSF5/CD40. Interacts with TNFRSF4, TNFRSF7/CD27, TNFRSF8/CD30, TNFRSF9/CD137, TNFRSF11A/RANK, TNFRSF13B/TACI, TNFRSF14, TNFRSF16/NGFR, TNFRSF17/BCMA, TNFRSF18/AITR, TNFRSF19/TROY, TNFRSF19L/RELT and EDAR. Stimulation of TNF-alpha receptor TNFRSF1A leads to the formation of two distinct signaling complexes. Plasma membrane-bound complex I is composed of TNFRSF1A, TRADD, RIPK1, TRAF2 and BIRC2/c-IAP1 or BIRC3 which interacts with CHUCK/IKK-alpha, IKBKB/IKK-beta and IKBKG/IKK-gamma promoting cell survival. Subsequently, TRADD, RIPK1 and TRAF2 dissociate from TNFRSF1A and form cytoplasmic complex II with FADD and caspase CASP8 promoting cell apoptosis. Interacts with TRADD. Identified in a complex with TNFRSF1A, RIPK1 and IKBKB/IKK-beta. Interacts with RIPK2. Interacts with BIRC2 and BIRC3 N-terminus; a single BIRC2 or BIRC3 molecule interacts with a heterotrimer formed by TRAF1 and TRAF2, or a TRAF2 homotrimer. Identified in a complex composed of TRAF2, TRAF3, BIRC2 and BIRC3. Interacts with BIRC2; the interaction promotes BIRC2 stability. Interaction with BIRC2 and/or BIRC3 is essential for ubiquitination of IKBKE, degradation of NFKBIA and activation of NF-kappa-B. Within complex I, phosphorylated TRAF2 interacts (via 'Lys-63'-linked polyubiquitin chains) with CHUCK/IKK-alpha, IKBKB/IKK-beta, IKBKG/IKK-gamma TAB2, TAB3 and TAK1 in response to TNF-alpha stimulation. Within complex I, interacts with UXT isoform 1 (via TPQE motif); the interaction prevents the recruitment of FADD and CASP8/caspase 8 to complex I. Forms a complex composed of TNFRSF8/CD30 or TNFRSF1B/TNFR2, and TRAF1, TRAF2 and E3 ligase TRAIP. Within the complex, interacts with TRAIP; the interaction inhibits TRAF2-mediated NF-kappa B activation. Component of a complex composed of TANK and TBK1. Interacts with TRPC4AP. Interacts with MAP3K1/MEKK1, MAP3K5/ASK1 and MAP3K11/MLK3 in response to TNF-alpha stimulation; the interaction leads to JNK activation and interaction with MAP3K5 is inhibited by PRMT1. Component of a complex composed of MAP3K14/NIK BIRC3 and TRAF3; the interaction leads to BIRC2/3-mediated ubiquitination of TRAF3 upon CD40 engagement in a TRAF2-dependent manner. Interacts with MAP3K14/NIK in response to TNF-alpha stimulation; the interaction leads to NF-kappa B activation. Interacts with PEG3; the interaction may promote TRAF2-mediated NF-kappa B activation. Interacts with HIVEP3; the interaction may inhibit TNF-alpha-TRAF2-mediated NF-kappa B and JNK activation. Interacts with TANK/ITRAF; the interaction prevents interaction between TNFRSF1B/TNFR2 and TRAF2. Interacts with deubiquitinating enzyme CYLD; the interaction results in the deubiquitination and inactivation of TRAF2. Interacts with SIAH2; the interaction leads to TRAF2 ubiquitination and degradation. Interacts with E2 conjugating enzyme UBE2N/Ubc13, E3 ligase ITCH and RNF11 in response to TNF-alpha stimulation. Interacts with ubiquitin-editing enzyme TNFAIP3/A20 in response to TNF-alpha stimulation; the interaction promotes TRAF2 dissociation from UBE2N/Ubc13, ITCH, RNF11 and TAX1BP1 and prevents prolonged TRAF-2 ubiquitination. Interacts with TAX1BP1 in response to TNF-alpha stimulation; the interaction promotes TRAF2 dissociation from UBE2N/Ubc13 and TNFAIP3/A20, and prevents prolonged TRAF-2 ubiquitination. Interacts (via C-terminus) with EIF2AK2/PKR (via the kinase catalytic domain). Interacts with deubiquitinating enzyme USP48. Interacts with PTPN2; probably involved in TNF-mediated signaling. Interacts with Toll-like receptor TLR4/3 adapter TICAM1/TRIF; the interaction may promote TICAM1 ubiquitination. Interacts with kinase/endoribonuclease ERN1/IRE1 and DAB2IP in response to ER stress; the interaction requires DAB2IP. Interacts with ERN1/IRE1 and TAOK3 in response to ER stress; the interaction may promote TRAF2 phosphorylation. Interacts (via zinc fingers) with DAB2IP (via C-terminus PER domain)in response to TNF-alpha stimulation. Interacts with CASP8AP2/FLASH. Interacts with NFATC2IP; the interaction may repress IL-4 production in T cells. Interacts with kinase CDK9. Interacts with sphingosine kinase 1 SPHK1. Interacts with kinase TNIK. Interacts with TRAFD1. Interacts with DNA phosphodiesterase TDP2. Interacts with MAVS/IPS1. Interacts with CARD14. Interacts with Epstein-Barr virus LMP1/BNFL1. Interacts with GPS2. Interacts with XPNPEP3. Interacts with RIPK3. Interacts with RELL2. Interacts with LRRC19. Interacts with GAPDH; promoting TRAF2 ubiquitination. Phosphorylated at several serine residues within the first 128 amino acid residues. Phosphorylated at Thr-117 in response to signaling via TNF and TNFRSF1A. Phosphorylation at Thr-117 is required for 'Lys-63'-linked polyubiquitination, but not for 'Lys-48'-linked polyubiquitination. Phosphorylation at Thr-117 is important for interaction with IKKA and IKKB, activation of IKK and subsequent activation of NF-kappa-B. In terms of processing, undergoes both 'Lys-48'-linked and 'Lys-63'-linked polyubiquitination. Polyubiquitinated via 'Lys-63'-linked ubiquitin in response to TNF signaling; this requires prior phosphorylation at Thr-117. 'Lys-63'-linked polyubiquitination promotes TRAF2-mediated activation of NF-kappa-B. Can be polyubiquitinated at several Lys residues via 'Lys-48'-linked ubiquitin chains in response to TNF signaling, leading to proteasomal degradation. Autoubiquitinated, leading to its subsequent proteasomal degradation. Polyubiquitinated by BIRC2 and SIAH2, leading to its subsequent proteasomal degradation. Deubiquitinated by CYLD, a protease that specifically cleaves 'Lys-63'-linked polyubiquitin chains. Ubiquination is inhibited by LRRC19; inhibits proteasomal degradation. Ubiquitinated at Lys-320 by the SCF(FBXL2) complex, leading to its degradation by the proteasome. Ubiquitinated by E3 ubiquitin-protein ligase complex containing FBXO7; leading to repression of NF-kappa-B signaling.

It is found in the cytoplasm. It catalyses the reaction S-ubiquitinyl-[E2 ubiquitin-conjugating enzyme]-L-cysteine + [acceptor protein]-L-lysine = [E2 ubiquitin-conjugating enzyme]-L-cysteine + N(6)-ubiquitinyl-[acceptor protein]-L-lysine.. It functions in the pathway protein modification; protein ubiquitination. Has very low E3 ubiquitin ligase activity in the absence of sphingosine-1-phosphate. E3 ubiquitin ligase activity is strongly activated by cytoplasmic sphingosine-1-phosphate. E3 ubiquitin-protein ligase that regulates activation of NF-kappa-B and JNK and plays a central role in the regulation of cell survival and apoptosis. Catalyzes 'Lys-63'-linked ubiquitination of target proteins, such as BIRC3, IKBKE, MLST8, RIPK1 and TICAM1. Is an essential constituent of several E3 ubiquitin-protein ligase complexes, where it promotes the ubiquitination of target proteins by bringing them into contact with other E3 ubiquitin ligases. Regulates BIRC2 and BIRC3 protein levels by inhibiting their autoubiquitination and subsequent degradation; this does not depend on the TRAF2 RING-type zinc finger domain. Plays a role in mediating activation of NF-kappa-B by EIF2AK2/PKR. In complex with BIRC2 or BIRC3, promotes ubiquitination of IKBKE. Acts as a regulator of mTORC1 and mTORC2 assembly by mediating 'Lys-63'-linked ubiquitination of MLST8, thereby inhibiting formation of the mTORC2 complex, while facilitating assembly of the mTORC1 complex. Required for normal antibody isotype switching from IgM to IgG. This Homo sapiens (Human) protein is TNF receptor-associated factor 2.